The chain runs to 152 residues: Deoxyuridine 5'-triphosphate nucleotidohydrolase (152 aa).

Residues 71-73, Asn84, 88-90, and Met98 contribute to the substrate site; these read RSG and LID.

It belongs to the dUTPase family. Requires Mg(2+) as cofactor.

It catalyses the reaction dUTP + H2O = dUMP + diphosphate + H(+). Its pathway is pyrimidine metabolism; dUMP biosynthesis; dUMP from dCTP (dUTP route): step 2/2. Its function is as follows. This enzyme is involved in nucleotide metabolism: it produces dUMP, the immediate precursor of thymidine nucleotides and it decreases the intracellular concentration of dUTP so that uracil cannot be incorporated into DNA. The chain is Deoxyuridine 5'-triphosphate nucleotidohydrolase from Shewanella loihica (strain ATCC BAA-1088 / PV-4).